The chain runs to 340 residues: Phosphoribosylformylglycinamidine cyclo-ligase (340 aa).

This sequence belongs to the AIR synthase family.

The protein resides in the cytoplasm. The catalysed reaction is 2-formamido-N(1)-(5-O-phospho-beta-D-ribosyl)acetamidine + ATP = 5-amino-1-(5-phospho-beta-D-ribosyl)imidazole + ADP + phosphate + H(+). It functions in the pathway purine metabolism; IMP biosynthesis via de novo pathway; 5-amino-1-(5-phospho-D-ribosyl)imidazole from N(2)-formyl-N(1)-(5-phospho-D-ribosyl)glycinamide: step 2/2. The protein is Phosphoribosylformylglycinamidine cyclo-ligase of Streptococcus pyogenes serotype M12 (strain MGAS2096).